We begin with the raw amino-acid sequence, 505 residues long: ATP synthase subunit alpha (505 aa).

171–178 is an ATP binding site; the sequence is GDRQTGKT.

Belongs to the ATPase alpha/beta chains family. F-type ATPases have 2 components, CF(1) - the catalytic core - and CF(0) - the membrane proton channel. CF(1) has five subunits: alpha(3), beta(3), gamma(1), delta(1), epsilon(1). CF(0) has three main subunits: a(1), b(2) and c(9-12). The alpha and beta chains form an alternating ring which encloses part of the gamma chain. CF(1) is attached to CF(0) by a central stalk formed by the gamma and epsilon chains, while a peripheral stalk is formed by the delta and b chains.

It is found in the cell inner membrane. It catalyses the reaction ATP + H2O + 4 H(+)(in) = ADP + phosphate + 5 H(+)(out). In terms of biological role, produces ATP from ADP in the presence of a proton gradient across the membrane. The alpha chain is a regulatory subunit. The protein is ATP synthase subunit alpha of Nitratiruptor sp. (strain SB155-2).